We begin with the raw amino-acid sequence, 641 residues long: Threonine--tRNA ligase (641 aa).

One can recognise a TGS domain in the interval 1–61 (MIKISFFDNQ…KKNGNLEILT (61 aa)). Positions 240 to 538 (DHKKINKELD…LVEETKGVFP (299 aa)) are catalytic. Positions 334, 385, and 515 each coordinate Zn(2+).

It belongs to the class-II aminoacyl-tRNA synthetase family. In terms of assembly, homodimer. It depends on Zn(2+) as a cofactor.

The protein localises to the cytoplasm. It carries out the reaction tRNA(Thr) + L-threonine + ATP = L-threonyl-tRNA(Thr) + AMP + diphosphate + H(+). Functionally, catalyzes the attachment of threonine to tRNA(Thr) in a two-step reaction: L-threonine is first activated by ATP to form Thr-AMP and then transferred to the acceptor end of tRNA(Thr). Also edits incorrectly charged L-seryl-tRNA(Thr). This is Threonine--tRNA ligase from Aster yellows witches'-broom phytoplasma (strain AYWB).